The following is a 188-amino-acid chain: D-glycero-beta-D-manno-heptose-1,7-bisphosphate 7-phosphatase (188 aa).

Zn(2+)-binding residues include C92, H94, C107, and C109.

It belongs to the GmhB family.

The protein resides in the cytoplasm. It carries out the reaction D-glycero-beta-D-manno-heptose 1,7-bisphosphate + H2O = D-glycero-beta-D-manno-heptose 1-phosphate + phosphate. It participates in nucleotide-sugar biosynthesis; ADP-L-glycero-beta-D-manno-heptose biosynthesis; ADP-L-glycero-beta-D-manno-heptose from D-glycero-beta-D-manno-heptose 7-phosphate: step 2/4. The protein operates within bacterial outer membrane biogenesis; LPS core biosynthesis. Its function is as follows. Converts the D-glycero-beta-D-manno-heptose 1,7-bisphosphate intermediate into D-glycero-beta-D-manno-heptose 1-phosphate by removing the phosphate group at the C-7 position. This Photorhabdus laumondii subsp. laumondii (strain DSM 15139 / CIP 105565 / TT01) (Photorhabdus luminescens subsp. laumondii) protein is D-glycero-beta-D-manno-heptose-1,7-bisphosphate 7-phosphatase (gmhB1).